Reading from the N-terminus, the 559-residue chain is Regulatory protein PHO2 (559 aa).

4 disordered regions span residues 16-88 (ATDL…KGEA), 132-158 (LRKK…DYDR), 293-333 (INSN…AKDN), and 534-559 (PTDS…HRWI). 2 stretches are compositionally biased toward low complexity: residues 24-52 (HDQQ…IQTQ) and 63-74 (NDMSASSNASDS). The homeobox DNA-binding region spans 77–136 (QRPKRTRAKGEALDVLKRKFEINPTPSLVERKKISDLIGMPEKNVRIWFQNRRAKLRKKQ). A compositionally biased stretch (polar residues) spans 141 to 151 (KDTIPSSQSRD). Residues 293 to 307 (INSNNTSDKNNSNTN) show a composition bias toward low complexity. Residues 308-323 (NDDDNDDNSNEDNDNS) are compositionally biased toward acidic residues. The segment covering 324–333 (SEDKRNAKDN) has biased composition (basic and acidic residues). Residue Thr542 is modified to Phosphothreonine.

The protein resides in the nucleus. In terms of biological role, regulator in phosphate metabolism and acts as a derepressor of another central regulator PHO5. Binds to the upstream activator sequence (UAS) of PHO5. It also binds to the TRP4, HIS4, and CYC1 promoters. The chain is Regulatory protein PHO2 (PHO2) from Saccharomyces cerevisiae (strain ATCC 204508 / S288c) (Baker's yeast).